Consider the following 772-residue polypeptide: Potassium transporter 24 (772 aa).

Residues methionine 1–alanine 23 lie on the Cytoplasmic side of the membrane. Residues valine 24 to valine 44 traverse the membrane as a helical segment. Residues tyrosine 45–alanine 66 lie on the Extracellular side of the membrane. Residues leucine 67–leucine 87 form a helical membrane-spanning segment. Over arginine 88–arginine 150 the chain is Cytoplasmic. Residues leucine 151–proline 171 form a helical membrane-spanning segment. The Extracellular portion of the chain corresponds to alanine 172 to lysine 192. Residues tyrosine 193–glycine 213 form a helical membrane-spanning segment. Residues threonine 214–arginine 216 are Cytoplasmic-facing. Residues valine 217–valine 237 form a helical membrane-spanning segment. The Extracellular segment spans residues tyrosine 238–threonine 265. Residues glycine 266–alanine 286 traverse the membrane as a helical segment. Residues aspartate 287–methionine 298 lie on the Cytoplasmic side of the membrane. A helical transmembrane segment spans residues alanine 299 to isoleucine 319. Residues serine 320–proline 344 are Extracellular-facing. The helical transmembrane segment at valine 345–phenylalanine 365 threads the bilayer. Residues serine 366–glutamine 392 are Cytoplasmic-facing. A helical membrane pass occupies residues isoleucine 393–phenylalanine 413. The Extracellular portion of the chain corresponds to arginine 414–glutamine 423. Residues glycine 424–leucine 444 traverse the membrane as a helical segment. Topologically, residues cysteine 445–serine 449 are cytoplasmic. The helical transmembrane segment at isoleucine 450–alanine 470 threads the bilayer. Topologically, residues serine 471–glutamate 477 are extracellular. The helical transmembrane segment at glycine 478–tyrosine 498 threads the bilayer. The Cytoplasmic portion of the chain corresponds to glycine 499–valine 772. Positions glutamate 656 to lysine 684 are disordered.

The protein belongs to the HAK/KUP transporter (TC 2.A.72.3) family.

The protein localises to the membrane. Functionally, high-affinity potassium transporter. The sequence is that of Potassium transporter 24 (HAK24) from Oryza sativa subsp. japonica (Rice).